The primary structure comprises 339 residues: N-acetyl-gamma-glutamyl-phosphate reductase (339 aa).

Residue cysteine 145 is part of the active site.

Belongs to the NAGSA dehydrogenase family. Type 1 subfamily.

It is found in the cytoplasm. It carries out the reaction N-acetyl-L-glutamate 5-semialdehyde + phosphate + NADP(+) = N-acetyl-L-glutamyl 5-phosphate + NADPH + H(+). It participates in amino-acid biosynthesis; L-arginine biosynthesis; N(2)-acetyl-L-ornithine from L-glutamate: step 3/4. Catalyzes the NADPH-dependent reduction of N-acetyl-5-glutamyl phosphate to yield N-acetyl-L-glutamate 5-semialdehyde. This Kosmotoga olearia (strain ATCC BAA-1733 / DSM 21960 / TBF 19.5.1) protein is N-acetyl-gamma-glutamyl-phosphate reductase.